A 344-amino-acid polypeptide reads, in one-letter code: Follistatin (344 aa).

An N-terminal signal peptide occupies residues 1–29; it reads MARPRHQPGGLCLLLLLLCQFMEDRSAQA. The region spanning 30 to 103 is the TB domain; it reads GNCWLRQAKN…TCENVDCGPG (74 aa). 8 cysteine pairs are disulfide-bonded: C32-C55, C42-C88, C56-C91, C95-C106, C100-C116, C118-C150, C122-C143, and C132-C164. Residues 94–117 enclose the Follistatin-like 1 domain; the sequence is TCENVDCGPGKKCRMNKKNKPRCV. Kazal-like domains lie at 112-166, 186-241, and 261-318; these read NKPR…KCKK, NAYC…KCIK, and KVGR…SCNS. The N-linked (GlcNAc...) asparagine glycan is linked to N124. The region spanning 167–190 is the Follistatin-like 2 domain; that stretch reads TCRDVFCPGSSTCVVDQTNNAYCV. 3 disulfides stabilise this stretch: C192/C225, C196/C218, and C207/C239. The 25-residue stretch at 244–268 folds into the Follistatin-like 3 domain; sequence SCDDIQCTGGKKCLWDFKVGRGRCS. Disulfide bonds link C270–C302, C274–C295, and C284–C316. A glycan (N-linked (GlcNAc...) asparagine) is linked at N288. A disordered region spans residues 316–344; it reads CNSISEDTEDEEEDEDQDYSFPISSILEW. Acidic residues predominate over residues 321-333; the sequence is EDTEDEEEDEDQD.

As to quaternary structure, interacts with GDF11. Interacts with activin A/INHBA. Interacts with myostatin/MSTN.

The protein resides in the secreted. It is found in the nucleus. The protein localises to the nucleolus. Functionally, multifunctional regulatory protein whose primary function is to antagonize members of the transforming growth factor beta (TGF-beta) superfamily including activin, myostatin, GDF11 or bone morphogenetic proteins (BMPs). Mechanistically, binds to these ligands in the extracellular space, blocking their type II receptor-binding site to inhibit downstream signaling. Plays an essential role in muscle fiber formation and growth both by preventing the repressive effects of myostatin and through SMAD3/AKT/mTOR signaling independently of myostatin. Also promotes neural differentiation by antagonizing the action BMP4. Acts as a specific inhibitor of the biosynthesis and secretion of pituitary follicle stimulating hormone (FSH) by sequestering activin A/INHBA. On the other hand, translocates into the nucleus where it down-regulates rRNA synthesis and ribosome biogenesis to maintain cellular energy homeostasis by binding to rDNA. The polypeptide is Follistatin (Bos taurus (Bovine)).